Reading from the N-terminus, the 663-residue chain is Subtilisin-like serine protease (663 aa).

The N-terminal stretch at 1-23 (MKKFGAVVLALFLVGLMAGSVLA) is a signal peptide. The propeptide at 24 to 136 (APQKPAVRNV…IQEDYVVKVA (113 aa)) is removed in mature form. In terms of domain architecture, Peptidase S8 spans 139–439 (TEGLDESAAQ…AGRVNAYKAA (301 aa)). Residues D170, H203, and S382 each act as charge relay system in the active site. 9 residues coordinate Ca(2+): P420, I423, D483, L484, D485, D497, Y498, T501, and E507. Residues 537 to 565 (VSDGSLGQPSGGGSEPSPSPSPEPTVDEK) form a disordered region. Positions 563 to 663 (DEKTFTGTVH…YQLDAKVYYG (101 aa)) are cleaved as a propeptide — removed in mature form.

It belongs to the peptidase S8 family. As to quaternary structure, monomer.

It carries out the reaction Hydrolysis of proteins with broad specificity for peptide bonds, and a preference for a large uncharged residue in P1. Hydrolyzes peptide amides.. With respect to regulation, resistant to treatment with 5% SDS, 8 M urea, 10% Triton X-100 or 10% Tween-20. Fully active although less stable in the presence of 10 mM EDTA. Activity not affected by the absence or presence of 10 mM CaCl(2). Unstable in the presence of 2 M or over GdnHCl and loses 35% and 99% of its activity upon incubation with 2 and 4 M GdnHCl, respectively, for 1 hour at 55 degrees Celsius. Nearly fully loses activity upon incubation at pH 2.0. Serine protease with a broad substrate specificity. In Thermococcus kodakarensis (strain ATCC BAA-918 / JCM 12380 / KOD1) (Pyrococcus kodakaraensis (strain KOD1)), this protein is Subtilisin-like serine protease.